The primary structure comprises 581 residues: Arginine--tRNA ligase (581 aa).

Positions 126-136 (PNLAKEMHVGH) match the 'HIGH' region motif.

This sequence belongs to the class-I aminoacyl-tRNA synthetase family. In terms of assembly, monomer.

It localises to the cytoplasm. It carries out the reaction tRNA(Arg) + L-arginine + ATP = L-arginyl-tRNA(Arg) + AMP + diphosphate. This chain is Arginine--tRNA ligase, found in Shewanella sp. (strain ANA-3).